A 492-amino-acid chain; its full sequence is RNA helicase CrhR (492 aa).

Positions 7-35 match the Q motif motif; that stretch reads STFADLGLSEKRCQLLADIGFEAPTQIQT. Positions 38–207 constitute a Helicase ATP-binding domain; sequence IPLLLSGRDM…NQFLNDPALV (170 aa). 51 to 58 is an ATP binding site; that stretch reads SQTGTGKT. Residues 155 to 158 carry the DEAD box motif; that stretch reads DEAD. The Helicase C-terminal domain occupies 234–379; sequence KALQPILEME…VCTIPNRSQV (146 aa). Residues 451 to 492 form a disordered region; sequence VLRRGRNAGGGQNKSGGGYQGKPGKPRRSSGGRRPAYSDRQQ. Residues 457–471 are compositionally biased toward gly residues; it reads NAGGGQNKSGGGYQG.

This sequence belongs to the DEAD box helicase family.

The protein resides in the cytoplasm. The protein localises to the cell inner membrane. It is found in the cellular thylakoid membrane. It carries out the reaction ATP + H2O = ADP + phosphate + H(+). Helicase inhibited by the slowly-hydrolyzing ATP analog ATP-gamma-S. Protein is rapidly degraded upon shifting from 20 to 30 degrees Celsius, the degradation machinery is only transiently present in cells grown at 30 degrees Celsius, is inhibited by commercial protease inhibitors and requires full-length protein expression (the N-terminal fragment does not induce proteolysis although it can be degraded by wild-type extract). Functionally, an ATP-dependent bidirectional RNA helicase with RNA-dependent ATPase activity; does not unwind dsDNA, uses only (d)ATP. Also has ATP-dependent RNA annealing activity; concurrent annealing and helicase activity promote strand-exchange activity. In vitro has low helicase processivity, annealing processivity is probably higher. Required for correct cold adaptation, probably by aiding translation of mRNAs required for photosynthesis and electron transport. Probably regulates the cold-shock-inducible expression of the GroESL chaperones. May partially regulate its own expression at both the transcriptional and post-transcriptional level (experiments used a construct expressing a 25 kDa trunacted protein which might have dominant-negative effects); is probably not directly involved in the pathway responsible for mRNA degradation. This is RNA helicase CrhR from Synechocystis sp. (strain ATCC 27184 / PCC 6803 / Kazusa).